The following is a 426-amino-acid chain: Testicular acid phosphatase (426 aa).

The first 26 residues, 1–26, serve as a signal peptide directing secretion; the sequence is MAGLGFWGHPAGPLLLLLLLVLPPRA. Residues 27-393 lie on the Extracellular side of the membrane; sequence LPEGPLVFVA…AAIPPAPVVP (367 aa). The active-site Nucleophile is the His41. Intrachain disulfides connect Cys159–Cys378, Cys214–Cys312, and Cys353–Cys357. 2 N-linked (GlcNAc...) asparagine glycosylation sites follow: Asn191 and Asn269. Asp289 acts as the Proton donor in catalysis. Asn330 and Asn339 each carry an N-linked (GlcNAc...) asparagine glycan. Residues 394-414 form a helical membrane-spanning segment; sequence LLAGAVAVLVALSLGLGLLAW. Residues 415 to 426 are Cytoplasmic-facing; sequence RPGCLRALGGPV.

It belongs to the histidine acid phosphatase family. Homodimer. In terms of processing, glycosylated. In terms of tissue distribution, expressed mainly in the testis. Also expressed in the brain where they are enriched at the postsynaptic sites. Expressed at lower levels in the trachea, prostate, bone marrow, spinal cord, colon, fetal brain, heart, thymus, fetal liver, spleen, leukocytes, ovary, small intestine, pancreas and skeletal muscle. Expression is significantly lower in testicular cancer tissues than in normal testicular tissues. Isoform 3 is expressed in the testis, trachea, prostate and bone marrow.

The protein resides in the membrane. It catalyses the reaction a phosphate monoester + H2O = an alcohol + phosphate. Its function is as follows. May dephosphorylate receptor tyrosine-protein kinase ERBB4 and inhibits its ligand-induced proteolytic cleavage. May play a role in odontogenesis. This is Testicular acid phosphatase from Homo sapiens (Human).